A 507-amino-acid polypeptide reads, in one-letter code: FLYWCH transcription factor 1 (507 aa).

Over residues 1-26 (MYSPESMNSNISSPSPPSSSSLNAPS) the composition is skewed to low complexity. The disordered stretch occupies residues 1-51 (MYSPESMNSNISSPSPPSSSSLNAPSLADAPEVRSDDGEAETSEPSTSVTA). The FLYWCH-type zinc-finger motif lies at 135-192 (KKTRLKVFSNGFFMTFDKLSSCQKKYFWRCEYKNTCKARMHTDIVTEKILTFIHEHNH).

Functionally, probable transcription factor. Binds to the DNA sequence motif 5'-[AG]GGCGCCG-3' in the promoters of target genes, including micro-RNA genes, in order to repress expression, and acting redundantly with flh-2. In Caenorhabditis elegans, this protein is FLYWCH transcription factor 1.